Here is a 548-residue protein sequence, read N- to C-terminus: Terpene synthase 1 (548 aa).

Mg(2+) contacts are provided by D301, D305, D445, and E453. The short motif at 301-305 is the DDXXD motif element; that stretch reads DDTYD.

The protein belongs to the terpene synthase family. Tpsa subfamily. Mg(2+) serves as cofactor. The cofactor is Mn(2+).

The enzyme catalyses (2E,6E)-farnesyl diphosphate = (+)-valencene + diphosphate. Its pathway is secondary metabolite biosynthesis; terpenoid biosynthesis. Functionally, sesquiterpene synthase involved in the biosynthesis of volatile compounds which contribute to fruit flavor and aroma. Mediates the conversion of (2E,6E)-farnesyl diphosphate (FPP) into (+)-valencene. No activity detected with geranyl diphosphate (GPP). In Citrus sinensis (Sweet orange), this protein is Terpene synthase 1.